The primary structure comprises 264 residues: MMPEIEILEEKDFKIKFILKNASPALANSFRRAMKAEVPAMAVDYVDIYLNSSYFYDEVIAHRLAMLPIKTYLDRFNMQSECSCGGEGCPNCQISFRLNVEGPKVVYSGDFISDDPDVVFAIDNIPVLELFEGQQLMLEAVARLGTGREHAKFQPVSVCVYKIIPEIVVNENCNGCGDCIEACPRNVFEKDGDKVRVKNVMACSMCGECVEVCEMNAISVNETNNFLFTVEGTGALPVREVMKKALEILRSKAEEMNKIIEEIQ.

Cys203, Cys206, and Cys209 together coordinate [3Fe-4S] cluster.

Belongs to the archaeal Rpo3/eukaryotic RPB3 RNA polymerase subunit family. As to quaternary structure, part of the RNA polymerase complex. The cofactor is [3Fe-4S] cluster.

It localises to the cytoplasm. The enzyme catalyses RNA(n) + a ribonucleoside 5'-triphosphate = RNA(n+1) + diphosphate. Functionally, DNA-dependent RNA polymerase (RNAP) catalyzes the transcription of DNA into RNA using the four ribonucleoside triphosphates as substrates. This is DNA-directed RNA polymerase subunit Rpo3 from Archaeoglobus fulgidus (strain ATCC 49558 / DSM 4304 / JCM 9628 / NBRC 100126 / VC-16).